A 151-amino-acid polypeptide reads, in one-letter code: Large ribosomal subunit protein bL9 (151 aa).

The protein belongs to the bacterial ribosomal protein bL9 family.

Its function is as follows. Binds to the 23S rRNA. The polypeptide is Large ribosomal subunit protein bL9 (Oenococcus oeni (strain ATCC BAA-331 / PSU-1)).